Consider the following 250-residue polypeptide: Acetylglutamate kinase (250 aa).

Substrate is bound by residues 41-42 (GG), Arg63, and Asn156.

Belongs to the acetylglutamate kinase family. ArgB subfamily.

The protein localises to the cytoplasm. The enzyme catalyses N-acetyl-L-glutamate + ATP = N-acetyl-L-glutamyl 5-phosphate + ADP. Its pathway is amino-acid biosynthesis; L-arginine biosynthesis; N(2)-acetyl-L-ornithine from L-glutamate: step 2/4. Catalyzes the ATP-dependent phosphorylation of N-acetyl-L-glutamate. The sequence is that of Acetylglutamate kinase from Listeria monocytogenes serotype 4b (strain CLIP80459).